A 515-amino-acid chain; its full sequence is GMP synthase [glutamine-hydrolyzing] (515 aa).

In terms of domain architecture, Glutamine amidotransferase type-1 spans 6–198; that stretch reads KVIILDFGSQ…VFKVAGLKAD (193 aa). Cysteine 83 acts as the Nucleophile in catalysis. Residues histidine 172 and glutamate 174 contribute to the active site. Positions 199-390 constitute a GMPS ATP-PPase domain; it reads WTMSSFVENC…LGLPEFIIWR (192 aa). 226–232 is a binding site for ATP; that stretch reads SGGIDST.

In terms of assembly, homodimer.

It catalyses the reaction XMP + L-glutamine + ATP + H2O = GMP + L-glutamate + AMP + diphosphate + 2 H(+). Its pathway is purine metabolism; GMP biosynthesis; GMP from XMP (L-Gln route): step 1/1. Its function is as follows. Catalyzes the synthesis of GMP from XMP. This chain is GMP synthase [glutamine-hydrolyzing], found in Maridesulfovibrio salexigens (strain ATCC 14822 / DSM 2638 / NCIMB 8403 / VKM B-1763) (Desulfovibrio salexigens).